The following is a 354-amino-acid chain: MASFPSLDNDRLLRTARGEPTDCTPVWMMRQAGRYLPEYQAIRKEHSFFEVVETPELAAEVTIQPVERFSLDAAILFCDIMVVPEAMGLTVKMVSGQGPTFPKPLTTPDEMERLVEPDVESALGHVFEALTVTRHELAGRVPLIGFSGAPWTLMAYMVEGGGSKSYRAARRWLYRHPDASKALLQRTTDVIVEYLIRQVDAGAQMLQVFDSWAGLHTPENFRTFCLPYLAEIATRVKAAHPDVPLVIFAKGAHYALDALADTDYDVISLDSTMDPDAARDTVGDRAVLQGNLDPCALYAPPDVLRREVQHMLAGFGPHHHIGNLGHGMLPDHDPEHARVFVDAVHEHSRHMRTV.

Substrate contacts are provided by residues 30–34, phenylalanine 49, aspartate 79, tyrosine 156, serine 211, and histidine 326; that span reads RQAGR.

Belongs to the uroporphyrinogen decarboxylase family. As to quaternary structure, homodimer.

Its subcellular location is the cytoplasm. The enzyme catalyses uroporphyrinogen III + 4 H(+) = coproporphyrinogen III + 4 CO2. The protein operates within porphyrin-containing compound metabolism; protoporphyrin-IX biosynthesis; coproporphyrinogen-III from 5-aminolevulinate: step 4/4. In terms of biological role, catalyzes the decarboxylation of four acetate groups of uroporphyrinogen-III to yield coproporphyrinogen-III. This chain is Uroporphyrinogen decarboxylase, found in Salinibacter ruber (strain DSM 13855 / M31).